Consider the following 485-residue polypeptide: NADH-quinone oxidoreductase subunit N (485 aa).

The next 14 membrane-spanning stretches (helical) occupy residues leucine 8–isoleucine 28, phenylalanine 35–valine 55, glycine 71–alanine 91, phenylalanine 105–leucine 125, alanine 127–phenylalanine 147, tyrosine 159–alanine 179, leucine 203–phenylalanine 223, proline 235–methionine 255, isoleucine 271–glutamine 291, leucine 297–glutamine 317, valine 326–leucine 346, alanine 373–isoleucine 393, tryptophan 408–valine 430, and isoleucine 455–isoleucine 475.

It belongs to the complex I subunit 2 family. In terms of assembly, NDH-1 is composed of 13 different subunits. Subunits NuoA, H, J, K, L, M, N constitute the membrane sector of the complex.

The protein resides in the cell inner membrane. The enzyme catalyses a quinone + NADH + 5 H(+)(in) = a quinol + NAD(+) + 4 H(+)(out). In terms of biological role, NDH-1 shuttles electrons from NADH, via FMN and iron-sulfur (Fe-S) centers, to quinones in the respiratory chain. The immediate electron acceptor for the enzyme in this species is believed to be ubiquinone. Couples the redox reaction to proton translocation (for every two electrons transferred, four hydrogen ions are translocated across the cytoplasmic membrane), and thus conserves the redox energy in a proton gradient. This Citrobacter koseri (strain ATCC BAA-895 / CDC 4225-83 / SGSC4696) protein is NADH-quinone oxidoreductase subunit N.